The following is a 212-amino-acid chain: uncharacterized protein (212 aa).

Positions 1–20 (MRRVLLCFLTLILLLPAASA) are cleaved as a signal peptide.

This is an uncharacterized protein from Archaeoglobus fulgidus (strain ATCC 49558 / DSM 4304 / JCM 9628 / NBRC 100126 / VC-16).